Consider the following 97-residue polypeptide: Co-chaperonin GroES (97 aa).

This sequence belongs to the GroES chaperonin family. In terms of assembly, heptamer of 7 subunits arranged in a ring. Interacts with the chaperonin GroEL.

The protein resides in the cytoplasm. Its function is as follows. Together with the chaperonin GroEL, plays an essential role in assisting protein folding. The GroEL-GroES system forms a nano-cage that allows encapsulation of the non-native substrate proteins and provides a physical environment optimized to promote and accelerate protein folding. GroES binds to the apical surface of the GroEL ring, thereby capping the opening of the GroEL channel. This chain is Co-chaperonin GroES, found in Arthrobacter sp. (strain FB24).